The sequence spans 309 residues: Probable 4-hydroxy-2-oxoglutarate aldolase, mitochondrial (309 aa).

Position 49-50 (49-50 (SN)) interacts with substrate. Lysine 173 (schiff-base intermediate with substrate) is an active-site residue.

The protein belongs to the DapA family.

It carries out the reaction (4S)-4-hydroxy-2-oxoglutarate = glyoxylate + pyruvate. The catalysed reaction is (4R)-4-hydroxy-2-oxoglutarate = glyoxylate + pyruvate. Inhibited by divalent cations. In terms of biological role, catalyzes the final step in the metabolic pathway of hydroxyproline. Involved in osmoadaptation. In Emericella nidulans (strain FGSC A4 / ATCC 38163 / CBS 112.46 / NRRL 194 / M139) (Aspergillus nidulans), this protein is Probable 4-hydroxy-2-oxoglutarate aldolase, mitochondrial.